The sequence spans 195 residues: uncharacterized protein (195 aa).

This is an uncharacterized protein from Schizosaccharomyces pombe (strain 972 / ATCC 24843) (Fission yeast).